The sequence spans 126 residues: Nascent polypeptide-associated complex protein (126 aa).

Residues 10 to 77 (PRMMKQMQKM…AKKVAKEEEK (68 aa)) form the NAC-A/B domain.

The protein belongs to the NAC-alpha family. In terms of assembly, homodimer. Interacts with the ribosome. Binds ribosomal RNA.

Contacts the emerging nascent chain on the ribosome. This chain is Nascent polypeptide-associated complex protein, found in Methanococcus maripaludis (strain DSM 14266 / JCM 13030 / NBRC 101832 / S2 / LL).